A 137-amino-acid chain; its full sequence is uncharacterized protein (137 aa).

The next 4 membrane-spanning stretches (helical) occupy residues 14-34 (AVVV…GSIS), 48-68 (YHII…SLSI), 84-104 (FFTI…LGLT), and 109-129 (HIPS…LNLF).

The protein localises to the cell membrane. This is an uncharacterized protein from Methanocaldococcus jannaschii (strain ATCC 43067 / DSM 2661 / JAL-1 / JCM 10045 / NBRC 100440) (Methanococcus jannaschii).